Here is a 407-residue protein sequence, read N- to C-terminus: Ribosomal protein uL3-like (407 aa).

Basic residues predominate over residues 1–31 (MSHRKFSAPRHGHLGFLPHKRSHRHRGKVKT). Disordered regions lie at residues 1 to 35 (MSHR…WPRD) and 387 to 407 (AFMG…SGDL).

Belongs to the universal ribosomal protein uL3 family. As to quaternary structure, component of the large ribosomal subunit in striated muscle cells.

Its function is as follows. Heart- and skeletal muscle-specific component of the ribosome, which regulates muscle function. Component of the large ribosomal subunit in striated muscle cells: replaces the RPL3 paralog in the ribosome in these cells. The ribosome is a large ribonucleoprotein complex responsible for the synthesis of proteins in the cell. Inhibits myotube growth and muscle function. The sequence is that of Ribosomal protein uL3-like from Homo sapiens (Human).